We begin with the raw amino-acid sequence, 433 residues long: Anthranilate synthase component 1 (433 aa).

L-tryptophan contacts are provided by residues S29 and P219–T221. Residue G253 to T254 participates in chorismate binding. E280 serves as a coordination point for Mg(2+). Residues Y368, R388, G402–G404, and G404 each bind chorismate. Residue E417 coordinates Mg(2+).

It belongs to the anthranilate synthase component I family. Heterotetramer consisting of two non-identical subunits: a beta subunit (TrpG) and a large alpha subunit (TrpE). Requires Mg(2+) as cofactor.

It catalyses the reaction chorismate + L-glutamine = anthranilate + pyruvate + L-glutamate + H(+). It functions in the pathway amino-acid biosynthesis; L-tryptophan biosynthesis; L-tryptophan from chorismate: step 1/5. With respect to regulation, feedback inhibited by tryptophan. Part of a heterotetrameric complex that catalyzes the two-step biosynthesis of anthranilate, an intermediate in the biosynthesis of L-tryptophan. In the first step, the glutamine-binding beta subunit (TrpG) of anthranilate synthase (AS) provides the glutamine amidotransferase activity which generates ammonia as a substrate that, along with chorismate, is used in the second step, catalyzed by the large alpha subunit of AS (TrpE) to produce anthranilate. In the absence of TrpG, TrpE can synthesize anthranilate directly from chorismate and high concentrations of ammonia. The protein is Anthranilate synthase component 1 (trpE) of Thermococcus kodakarensis (strain ATCC BAA-918 / JCM 12380 / KOD1) (Pyrococcus kodakaraensis (strain KOD1)).